The chain runs to 321 residues: uncharacterized protein (321 aa).

Basic residues predominate over residues 1–12; that stretch reads MSMFLKKQKKTK. Disordered regions lie at residues 1–59 and 71–289; these read MSMF…MRKT and EDCT…GPED. Residues 50 to 59 are compositionally biased toward basic and acidic residues; the sequence is DGIKETMRKT. Residues 99–115 are compositionally biased toward acidic residues; that stretch reads DDSDSESSEDGGEDDEE. Residues 156–175 show a composition bias toward low complexity; the sequence is SDSSSSSSSSSDSESSSSSD. Basic and acidic residues predominate over residues 179–189; the sequence is DGDRSTPEPDI. Low complexity predominate over residues 231 to 242; it reads EPSPLRAAAAAA.

This is an uncharacterized protein from Equus caballus (Horse).